Here is an 82-residue protein sequence, read N- to C-terminus: Neuropeptide-like peptide 36 (82 aa).

This chain is Neuropeptide-like peptide 36 (nlp-36), found in Caenorhabditis elegans.